Consider the following 78-residue polypeptide: Large ribosomal subunit protein bL28 (78 aa).

It belongs to the bacterial ribosomal protein bL28 family.

The chain is Large ribosomal subunit protein bL28 from Acidithiobacillus ferrooxidans (strain ATCC 23270 / DSM 14882 / CIP 104768 / NCIMB 8455) (Ferrobacillus ferrooxidans (strain ATCC 23270)).